The chain runs to 251 residues: Capsid protein (251 aa).

The Bipartite nuclear localization signal motif lies at 3–20; that stretch reads KRDAPWRSMAGTSKVSRN. The Nuclear localization signal signature appears at 35–49; it reads KAAAWVNRPMYRKPR. A zinc finger lies at 63 to 80; it reads CEGPCKVQSYEQRHDISH. The short motif at 96-117 is the Nuclear export signal element; sequence ITHRVGKRFCVKSVYILGKIWM. Residues 195–242 carry the Bipartite nuclear localization signal motif; it reads KRFWKVNNYVVYNHQEAGKYENHTENALLLYMACTHASNPVYATLKIR.

Belongs to the geminiviridae capsid protein family. As to quaternary structure, homomultimer. Binds to single-stranded and double-stranded viral DNA. Interacts (via nuclear localization signals) with host importin alpha-1a.

It localises to the virion. It is found in the host nucleus. In terms of biological role, encapsidates the viral DNA into characteristic twinned ('geminate') particles. Binds the genomic viral ssDNA and shuttles it into and out of the cell nucleus. The CP of bipartite geminiviruses is not required for cell-to-cell or systemic movement. The polypeptide is Capsid protein (Cabbage leaf curl virus (isolate Jamaica) (CaLCuV)).